A 94-amino-acid polypeptide reads, in one-letter code: Small ribosomal subunit protein bS20 (94 aa).

The segment covering Met1–Arg10 has biased composition (basic and acidic residues). Residues Met1 to Arg20 are disordered. A compositionally biased stretch (basic residues) spans Asn11 to Arg20.

It belongs to the bacterial ribosomal protein bS20 family.

Binds directly to 16S ribosomal RNA. The chain is Small ribosomal subunit protein bS20 from Sorangium cellulosum (strain So ce56) (Polyangium cellulosum (strain So ce56)).